Reading from the N-terminus, the 251-residue chain is MHSTLHALPVLQDNVIWIWARGKNAVVVDPAVAEPVNQWLNAHGMCLRAILQTHHHADHIGGTPDLLREWPQAEVVAATADRLRIPLQTRGVADGDVINLLGRRLEVIDVAAHTSAHIAFIIRNDDDQDPSFGPLAFCGDTLFAGGCGRLFEGSAQDMYRALQRFAALPDETLVCCAHEYTEANLRWATEQRPNDVQITTRHQTVKALRSRGDLSLPSSIGAEKRTNLFMQAETAEQLAELRSHKDHWRSS.

Zn(2+)-binding residues include histidine 54, histidine 56, aspartate 58, histidine 59, histidine 113, aspartate 140, and histidine 178.

This sequence belongs to the metallo-beta-lactamase superfamily. Glyoxalase II family. As to quaternary structure, monomer. Zn(2+) is required as a cofactor.

The catalysed reaction is an S-(2-hydroxyacyl)glutathione + H2O = a 2-hydroxy carboxylate + glutathione + H(+). The protein operates within secondary metabolite metabolism; methylglyoxal degradation; (R)-lactate from methylglyoxal: step 2/2. Functionally, thiolesterase that catalyzes the hydrolysis of S-D-lactoyl-glutathione to form glutathione and D-lactic acid. The polypeptide is Hydroxyacylglutathione hydrolase (Synechococcus sp. (strain CC9902)).